The following is a 140-amino-acid chain: Class I hydrophobin B (140 aa).

Residues 1–16 form the signal peptide; the sequence is MKFLAVVSLLAATALA. Disulfide bonds link C42-C113, C50-C107, C51-C88, and C114-C133. A glycan (N-linked (GlcNAc...) asparagine) is linked at N117.

Belongs to the fungal hydrophobin family. As to quaternary structure, self-assembles to form functional amyloid fibrils called rodlets. Self-assembly into fibrillar rodlets occurs spontaneously at hydrophobic:hydrophilic interfaces and the rodlets further associate laterally to form amphipathic monolayers.

Its subcellular location is the secreted. The protein localises to the spore wall. Aerial growth, conidiation, and dispersal of filamentous fungi in the environment rely upon a capability of their secreting small amphipathic proteins called hydrophobins (HPBs) with low sequence identity. Class I can self-assemble into an outermost layer of rodlet bundles on aerial cell surfaces, conferring cellular hydrophobicity that supports fungal growth, development and dispersal; whereas Class II form highly ordered films at water-air interfaces through intermolecular interactions but contribute nothing to the rodlet structure. RodB is a class I hydrophobin that, unlike rodA, is not required for rodlet formation. The polypeptide is Class I hydrophobin B (Aspergillus fumigatus (strain ATCC MYA-4609 / CBS 101355 / FGSC A1100 / Af293) (Neosartorya fumigata)).